An 82-amino-acid polypeptide reads, in one-letter code: Small ribosomal subunit protein bS18 (82 aa).

The disordered stretch occupies residues Met-1 to Cys-20.

The protein belongs to the bacterial ribosomal protein bS18 family. Part of the 30S ribosomal subunit. Forms a tight heterodimer with protein bS6.

Binds as a heterodimer with protein bS6 to the central domain of the 16S rRNA, where it helps stabilize the platform of the 30S subunit. The chain is Small ribosomal subunit protein bS18 from Brucella suis (strain ATCC 23445 / NCTC 10510).